Reading from the N-terminus, the 323-residue chain is MIEFGNFYQLIAKNHLSHWLETLPAQIAAWQREQQHGLFKQWSNAVEFLPEITPWRLDLLHSVTAESETPLSEGQLKRIDTLLRNLMPWRKGPFSLYGVDIDTEWRSDWKWDRVLPHLSDLTGRTILDVGCGSGYHLWRMIGAGAHLAVGIDPTQLFLCQFEAVRKLLGNDQRAHLLPLGIEQLPALKAFDTVFSMGVLYHRRSPLEHLWQLKDQLVNEGELVLETLVVDGDENTVLVPGDRYAQMRNVYFIPSAPALKKWLEKCGFVDVRIADVCVTTTEEQRRTEWMVTESLADFLDPNDRSKTVEGYPAPQRAVLIARKP.

Carboxy-S-adenosyl-L-methionine-binding positions include lysine 91, tryptophan 105, lysine 110, glycine 130, 152 to 154 (DPT), 181 to 182 (IE), methionine 196, tyrosine 200, and arginine 315.

Belongs to the class I-like SAM-binding methyltransferase superfamily. CmoB family. In terms of assembly, homotetramer.

The catalysed reaction is carboxy-S-adenosyl-L-methionine + 5-hydroxyuridine(34) in tRNA = 5-carboxymethoxyuridine(34) in tRNA + S-adenosyl-L-homocysteine + H(+). Its function is as follows. Catalyzes carboxymethyl transfer from carboxy-S-adenosyl-L-methionine (Cx-SAM) to 5-hydroxyuridine (ho5U) to form 5-carboxymethoxyuridine (cmo5U) at position 34 in tRNAs. The polypeptide is tRNA U34 carboxymethyltransferase (Salmonella typhi).